Consider the following 604-residue polypeptide: Kelch-like protein 20 (604 aa).

Residues 63-130 (CDVVLVVGAK…SYTSQITVEE (68 aa)) form the BTB domain. One can recognise a BACK domain in the interval 165-267 (CLGIRAFADT…SPKFLVGTVG (103 aa)). Kelch repeat units lie at residues 314–360 (VLFA…VLDD), 362–408 (LYAV…VLGG), 409–455 (YLYA…VLGG), 457–502 (LYAV…VYQD), 504–549 (IYAV…VVNG), and 551–596 (LMAV…VIKM).

As to quaternary structure, component of the BCR(KLHL20) E3 ubiquitin ligase complex, at least composed of cul3, klhl20 and rbx1.

It localises to the cytoplasm. Its subcellular location is the perinuclear region. It is found in the nucleus. It functions in the pathway protein modification; protein ubiquitination. In terms of biological role, substrate-specific adapter of a BCR (BTB-CUL3-RBX1) E3 ubiquitin-protein ligase complex involved in interferon response and anterograde Golgi to endosome transport. The BCR(KLHL20) E3 ubiquitin ligase complex mediates the ubiquitination of target proteins, leading to their degradation by the proteasome. It also specifically mediates 'Lys-33'-linked ubiquitination. The chain is Kelch-like protein 20 (klhl20) from Xenopus laevis (African clawed frog).